Consider the following 297-residue polypeptide: 33 kDa chaperonin (297 aa).

Intrachain disulfides connect cysteine 239-cysteine 241 and cysteine 272-cysteine 275.

This sequence belongs to the HSP33 family. In terms of processing, under oxidizing conditions two disulfide bonds are formed involving the reactive cysteines. Under reducing conditions zinc is bound to the reactive cysteines and the protein is inactive.

The protein localises to the cytoplasm. Redox regulated molecular chaperone. Protects both thermally unfolding and oxidatively damaged proteins from irreversible aggregation. Plays an important role in the bacterial defense system toward oxidative stress. This is 33 kDa chaperonin from Clostridium acetobutylicum (strain ATCC 824 / DSM 792 / JCM 1419 / IAM 19013 / LMG 5710 / NBRC 13948 / NRRL B-527 / VKM B-1787 / 2291 / W).